A 296-amino-acid polypeptide reads, in one-letter code: Bifunctional protein FolD (296 aa).

Residues 166–168 (GRS), Ser191, and Ile232 each bind NADP(+).

The protein belongs to the tetrahydrofolate dehydrogenase/cyclohydrolase family. In terms of assembly, homodimer.

The enzyme catalyses (6R)-5,10-methylene-5,6,7,8-tetrahydrofolate + NADP(+) = (6R)-5,10-methenyltetrahydrofolate + NADPH. It carries out the reaction (6R)-5,10-methenyltetrahydrofolate + H2O = (6R)-10-formyltetrahydrofolate + H(+). Its pathway is one-carbon metabolism; tetrahydrofolate interconversion. Catalyzes the oxidation of 5,10-methylenetetrahydrofolate to 5,10-methenyltetrahydrofolate and then the hydrolysis of 5,10-methenyltetrahydrofolate to 10-formyltetrahydrofolate. The sequence is that of Bifunctional protein FolD from Cereibacter sphaeroides (strain ATCC 17023 / DSM 158 / JCM 6121 / CCUG 31486 / LMG 2827 / NBRC 12203 / NCIMB 8253 / ATH 2.4.1.) (Rhodobacter sphaeroides).